Here is a 458-residue protein sequence, read N- to C-terminus: GDP-fucose protein O-fucosyltransferase 3 (458 aa).

At 1–11 (MRRISVKKLCS) the chain is on the cytoplasmic side. Residues 12–32 (FCLCACAFAFLVMTFQVIELL) form a helical; Signal-anchor for type II membrane protein membrane-spanning segment. Residues 33-458 (GQFEQTEHRQ…TQFWREVFTD (426 aa)) are Lumenal-facing. 3 N-linked (GlcNAc...) asparagine glycosylation sites follow: Asn92, Asn150, and Asn300. A disulfide bridge connects residues Cys371 and Cys374. Asn445 carries N-linked (GlcNAc...) asparagine glycosylation.

The protein belongs to the glycosyltransferase 10 family.

Its subcellular location is the endoplasmic reticulum membrane. The catalysed reaction is L-threonyl-[protein] + GDP-beta-L-fucose = 3-O-(alpha-L-fucosyl)-L-threonyl-[protein] + GDP + H(+). It catalyses the reaction L-seryl-[protein] + GDP-beta-L-fucose = 3-O-(alpha-L-fucosyl)-L-seryl-[protein] + GDP + H(+). It participates in protein modification; protein glycosylation. Functionally, protein O-fucosyltransferase that specifically catalyzes O-fucosylation of serine or threonine residues in EMI domains of target proteins. Attaches fucose through an O-glycosidic linkage. O-fucosylation of EMI domain-containing proteins may be required for facilitating protein folding and secretion. The protein is GDP-fucose protein O-fucosyltransferase 3 (fut10) of Danio rerio (Zebrafish).